The sequence spans 608 residues: Chaperone protein HtpG (608 aa).

Residues 1-332 (MQFQTEVNQL…VEDLPLNVSR (332 aa)) form an a; substrate-binding region. The segment at 333 to 536 (EILQENQILK…KNKPDFAMQQ (204 aa)) is b. Residues 537–608 (LLKQMGQEQN…LTKIINKAFS (72 aa)) are c.

Belongs to the heat shock protein 90 family. Homodimer.

The protein resides in the cytoplasm. Functionally, molecular chaperone. Has ATPase activity. The sequence is that of Chaperone protein HtpG from Campylobacter jejuni subsp. jejuni serotype O:23/36 (strain 81-176).